A 152-amino-acid chain; its full sequence is 3-hydroxyacyl-[acyl-carrier-protein] dehydratase FabZ (152 aa).

H58 is a catalytic residue.

Belongs to the thioester dehydratase family. FabZ subfamily.

It localises to the cytoplasm. The catalysed reaction is a (3R)-hydroxyacyl-[ACP] = a (2E)-enoyl-[ACP] + H2O. Functionally, involved in unsaturated fatty acids biosynthesis. Catalyzes the dehydration of short chain beta-hydroxyacyl-ACPs and long chain saturated and unsaturated beta-hydroxyacyl-ACPs. This Prochlorococcus marinus (strain MIT 9515) protein is 3-hydroxyacyl-[acyl-carrier-protein] dehydratase FabZ.